The primary structure comprises 432 residues: Amino-acid acetyltransferase (432 aa).

The N-acetyltransferase domain occupies 286–425 (ESLREATIED…ASLYNYQRNS (140 aa)).

It belongs to the acetyltransferase family. ArgA subfamily.

It localises to the cytoplasm. It carries out the reaction L-glutamate + acetyl-CoA = N-acetyl-L-glutamate + CoA + H(+). The protein operates within amino-acid biosynthesis; L-arginine biosynthesis; N(2)-acetyl-L-ornithine from L-glutamate: step 1/4. The sequence is that of Amino-acid acetyltransferase from Ectopseudomonas mendocina (strain ymp) (Pseudomonas mendocina).